Consider the following 358-residue polypeptide: MQTNGRILVVQPELYATTIGVFENERFLYKQTIQHNEEELSKFTRIMDQVAYRKQTLLHQLDLDGINISKFSAVCGRGGLLQPITGGTYAVNDKMLYDLKTASYGEHVSNLGAVIADSIAKGLNIPAYIVDPPVVDEMQSIARISGIPEIERKSIFHALNHRQAGRLASKRLGKNYNELNLIVIHIARGITIGAHNKGKIIDVTNGLEGEGPFTIDRSGGIPIARFLRYGIDKFDQIEDWEQKLIKQSGLKGYLHTEDPKVIQLNLLKKDPWTMEIMQALAYQIAKEIGSMSTVLHGEVDGIVFTGNVEDDDFVMKEVITRINWIADVMVFPGNNELEAMNEGVLQVIRGEIPVKVYP.

Belongs to the acetokinase family.

Its subcellular location is the cytoplasm. The enzyme catalyses butanoate + ATP = butanoyl phosphate + ADP. This is Probable butyrate kinase from Oceanobacillus iheyensis (strain DSM 14371 / CIP 107618 / JCM 11309 / KCTC 3954 / HTE831).